We begin with the raw amino-acid sequence, 252 residues long: Hydroxyacylglutathione hydrolase (252 aa).

His-52, His-54, Asp-56, His-57, His-107, Asp-128, and His-166 together coordinate Zn(2+).

Belongs to the metallo-beta-lactamase superfamily. Glyoxalase II family. As to quaternary structure, monomer. It depends on Zn(2+) as a cofactor.

It catalyses the reaction an S-(2-hydroxyacyl)glutathione + H2O = a 2-hydroxy carboxylate + glutathione + H(+). It participates in secondary metabolite metabolism; methylglyoxal degradation; (R)-lactate from methylglyoxal: step 2/2. Thiolesterase that catalyzes the hydrolysis of S-D-lactoyl-glutathione to form glutathione and D-lactic acid. The sequence is that of Hydroxyacylglutathione hydrolase from Neisseria meningitidis serogroup C / serotype 2a (strain ATCC 700532 / DSM 15464 / FAM18).